We begin with the raw amino-acid sequence, 378 residues long: Dual-specificity RNA methyltransferase RlmN (378 aa).

The active-site Proton acceptor is E96. Residues 102 to 340 enclose the Radical SAM core domain; that stretch reads DNGRGTLCVS…ATVRTTRGDD (239 aa). A disulfide bond links C109 and C345. Residues C116, C120, and C123 each contribute to the [4Fe-4S] cluster site. S-adenosyl-L-methionine-binding positions include 170 to 171, S202, 224 to 226, and N302; these read GE and SLH. The active-site S-methylcysteine intermediate is C345.

This sequence belongs to the radical SAM superfamily. RlmN family. [4Fe-4S] cluster is required as a cofactor.

The protein localises to the cytoplasm. The catalysed reaction is adenosine(2503) in 23S rRNA + 2 reduced [2Fe-2S]-[ferredoxin] + 2 S-adenosyl-L-methionine = 2-methyladenosine(2503) in 23S rRNA + 5'-deoxyadenosine + L-methionine + 2 oxidized [2Fe-2S]-[ferredoxin] + S-adenosyl-L-homocysteine. The enzyme catalyses adenosine(37) in tRNA + 2 reduced [2Fe-2S]-[ferredoxin] + 2 S-adenosyl-L-methionine = 2-methyladenosine(37) in tRNA + 5'-deoxyadenosine + L-methionine + 2 oxidized [2Fe-2S]-[ferredoxin] + S-adenosyl-L-homocysteine. Specifically methylates position 2 of adenine 2503 in 23S rRNA and position 2 of adenine 37 in tRNAs. m2A2503 modification seems to play a crucial role in the proofreading step occurring at the peptidyl transferase center and thus would serve to optimize ribosomal fidelity. This is Dual-specificity RNA methyltransferase RlmN from Hahella chejuensis (strain KCTC 2396).